We begin with the raw amino-acid sequence, 263 residues long: MLTNNNNHPFHMVDYSPWPLTGAIGAMILTSGMTKWFHTFNMNLLMIGMTVIVLTMIQWWRDVVREGTFQGLHTKLVSKGLRWGMILFIASEVLFFASFFWAFFNSSLAPTIELGMKWPPMGIQPFNPIQIPLLNTAILLASGVTITWAHHSIMECNHSQALQGLFFTVMLGFYFTLLQMYEYWEAPFTIADAVYGSTFFVATGFHGLHVIIGTTFLLTCLIRHMMNQFSSNHHFGFEAAAWYWHFVDVVWLFLYLSIYWWGS.

Helical transmembrane passes span proline 9 to leucine 29, phenylalanine 40 to tryptophan 60, glycine 84 to phenylalanine 104, isoleucine 129 to alanine 149, alanine 161 to tyrosine 181, threonine 198 to leucine 218, and alanine 241 to tryptophan 261.

This sequence belongs to the cytochrome c oxidase subunit 3 family. As to quaternary structure, component of the cytochrome c oxidase (complex IV, CIV), a multisubunit enzyme composed of a catalytic core of 3 subunits and several supernumerary subunits. The complex exists as a monomer or a dimer and forms supercomplexes (SCs) in the inner mitochondrial membrane with ubiquinol-cytochrome c oxidoreductase (cytochrome b-c1 complex, complex III, CIII).

It is found in the mitochondrion inner membrane. It catalyses the reaction 4 Fe(II)-[cytochrome c] + O2 + 8 H(+)(in) = 4 Fe(III)-[cytochrome c] + 2 H2O + 4 H(+)(out). In terms of biological role, component of the cytochrome c oxidase, the last enzyme in the mitochondrial electron transport chain which drives oxidative phosphorylation. The respiratory chain contains 3 multisubunit complexes succinate dehydrogenase (complex II, CII), ubiquinol-cytochrome c oxidoreductase (cytochrome b-c1 complex, complex III, CIII) and cytochrome c oxidase (complex IV, CIV), that cooperate to transfer electrons derived from NADH and succinate to molecular oxygen, creating an electrochemical gradient over the inner membrane that drives transmembrane transport and the ATP synthase. Cytochrome c oxidase is the component of the respiratory chain that catalyzes the reduction of oxygen to water. Electrons originating from reduced cytochrome c in the intermembrane space (IMS) are transferred via the dinuclear copper A center (CU(A)) of subunit 2 and heme A of subunit 1 to the active site in subunit 1, a binuclear center (BNC) formed by heme A3 and copper B (CU(B)). The BNC reduces molecular oxygen to 2 water molecules using 4 electrons from cytochrome c in the IMS and 4 protons from the mitochondrial matrix. The chain is Cytochrome c oxidase subunit 3 (COIII) from Locusta migratoria (Migratory locust).